Here is a 194-residue protein sequence, read N- to C-terminus: Surfactant protein C (194 aa).

Residues 1-21 (MDMGSKEVLMESPPDYSTGPR) are disordered. Residues 1–23 (MDMGSKEVLMESPPDYSTGPRSQ) constitute a propeptide that is removed on maturation. S-palmitoyl cysteine attachment occurs at residues C28 and C29. A propeptide spanning residues 59 to 194 (HMSQKHTEMV…LCGELPLYYI (136 aa)) is cleaved from the precursor. In terms of domain architecture, BRICHOS spans 95 to 194 (FSIGSTGIVL…LCGELPLYYI (100 aa)). An intrachain disulfide couples C122 to C186. Residues 149–170 (SSTPTSKLGQEEGHSAGSDSDS) form a disordered region.

The protein localises to the secreted. It localises to the extracellular space. The protein resides in the surface film. In terms of biological role, pulmonary surfactant associated proteins promote alveolar stability by lowering the surface tension at the air-liquid interface in the peripheral air spaces. In Rattus norvegicus (Rat), this protein is Surfactant protein C.